Here is a 275-residue protein sequence, read N- to C-terminus: NH(3)-dependent NAD(+) synthetase (275 aa).

46 to 53 serves as a coordination point for ATP; it reads GISGGQDS. Residue Asp-52 participates in Mg(2+) binding. Arg-140 serves as a coordination point for deamido-NAD(+). Residue Thr-160 coordinates ATP. Residue Glu-165 participates in Mg(2+) binding. Residues Lys-173 and Asp-180 each contribute to the deamido-NAD(+) site. Lys-189 and Thr-211 together coordinate ATP. 260 to 261 serves as a coordination point for deamido-NAD(+); sequence HK.

Belongs to the NAD synthetase family. In terms of assembly, homodimer.

The enzyme catalyses deamido-NAD(+) + NH4(+) + ATP = AMP + diphosphate + NAD(+) + H(+). It participates in cofactor biosynthesis; NAD(+) biosynthesis; NAD(+) from deamido-NAD(+) (ammonia route): step 1/1. Its function is as follows. Catalyzes the ATP-dependent amidation of deamido-NAD to form NAD. Uses ammonia as a nitrogen source. The chain is NH(3)-dependent NAD(+) synthetase from Shigella boydii serotype 18 (strain CDC 3083-94 / BS512).